Reading from the N-terminus, the 160-residue chain is Cytochrome b6-f complex subunit 4 (160 aa).

3 helical membrane-spanning segments follow: residues 36-56 (LLYV…GLSV), 95-115 (LLGV…PFIE), and 131-151 (LTFI…CVPI).

Belongs to the cytochrome b family. PetD subfamily. The 4 large subunits of the cytochrome b6-f complex are cytochrome b6, subunit IV (17 kDa polypeptide, petD), cytochrome f and the Rieske protein, while the 4 small subunits are petG, petL, petM and petN. The complex functions as a dimer.

Its subcellular location is the plastid. The protein resides in the chloroplast thylakoid membrane. In terms of biological role, component of the cytochrome b6-f complex, which mediates electron transfer between photosystem II (PSII) and photosystem I (PSI), cyclic electron flow around PSI, and state transitions. The protein is Cytochrome b6-f complex subunit 4 of Phaeodactylum tricornutum (strain CCAP 1055/1).